A 201-amino-acid polypeptide reads, in one-letter code: Probable chemoreceptor glutamine deamidase CheD 1 (201 aa).

This sequence belongs to the CheD family.

It catalyses the reaction L-glutaminyl-[protein] + H2O = L-glutamyl-[protein] + NH4(+). Probably deamidates glutamine residues to glutamate on methyl-accepting chemotaxis receptors (MCPs), playing an important role in chemotaxis. This Dechloromonas aromatica (strain RCB) protein is Probable chemoreceptor glutamine deamidase CheD 1.